Reading from the N-terminus, the 306-residue chain is Putative syntaxin-131 (306 aa).

N-acetylmethionine is present on methionine 1. Over 1–276 the chain is Cytoplasmic; the sequence is MNDLLKGSLE…AVKSQKSSRK (276 aa). The segment covering 11-23 has biased composition (basic and acidic residues); it reads FSRDRSNRSDIES. The tract at residues 11 to 35 is disordered; it reads FSRDRSNRSDIESGHGPGNSGDLGL. Coiled coils occupy residues 35–72 and 134–162; these read LSGF…VTKA and KKKF…VERR. Residues 205–267 form the t-SNARE coiled-coil homology domain; sequence LAEIQERHDA…QSGNNQLTKA (63 aa). The chain crosses the membrane as a helical; Anchor for type IV membrane protein span at residues 277–297; sequence WMCIAILILLIIIIITVISVL. Residues 298–306 are Vesicular-facing; sequence KPWTQKNGA.

The protein belongs to the syntaxin family. As to quaternary structure, part of the t-SNARE complex.

The protein localises to the membrane. In terms of biological role, vesicle trafficking protein that functions in the secretory pathway. This chain is Putative syntaxin-131 (SYP131), found in Arabidopsis thaliana (Mouse-ear cress).